We begin with the raw amino-acid sequence, 264 residues long: Spermidine/putrescine transport system permease protein PotC (264 aa).

6 helical membrane passes run 10 to 30 (FMTA…VNSF), 66 to 86 (MAVF…VALY), 109 to 129 (IVMA…LGFW), 131 to 151 (LLFS…YSRL), 176 to 196 (IILP…FTLS), and 232 to 252 (ALAT…QLIA). The ABC transmembrane type-1 domain maps to 60–248 (AQHSLTMAVF…VLSLVMVIAS (189 aa)).

This sequence belongs to the binding-protein-dependent transport system permease family. CysTW subfamily.

It localises to the cell inner membrane. Its function is as follows. Required for the activity of the bacterial periplasmic transport system of putrescine and spermidine. The sequence is that of Spermidine/putrescine transport system permease protein PotC (potC) from Shigella flexneri.